Reading from the N-terminus, the 230-residue chain is Cytochrome c oxidase subunit 2 (230 aa).

The Mitochondrial intermembrane portion of the chain corresponds to 1-29 (NNFFQGYNLLFQHSLFASYMDWFHAFNCS). Residues 30–50 (LLLGVLVFVTLLFGYLIFSTF) traverse the membrane as a helical segment. The Mitochondrial matrix portion of the chain corresponds to 51-63 (YFKSKKIEYQFGE). A helical transmembrane segment spans residues 64 to 84 (LLCSIFPTIILLMQMVPSLSL). Residues 85 to 230 (LYYYGLMNLD…FKSWCFGTME (146 aa)) lie on the Mitochondrial intermembrane side of the membrane. The Cu cation site is built by H163, C198, E200, C202, H206, and M209. E200 contacts Mg(2+).

Belongs to the cytochrome c oxidase subunit 2 family. In terms of assembly, component of the cytochrome c oxidase (complex IV, CIV), a multisubunit enzyme composed of a catalytic core of 3 subunits and several supernumerary subunits. The complex exists as a monomer or a dimer and forms supercomplexes (SCs) in the inner mitochondrial membrane with ubiquinol-cytochrome c oxidoreductase (cytochrome b-c1 complex, complex III, CIII). The cofactor is Cu cation.

It localises to the mitochondrion inner membrane. The catalysed reaction is 4 Fe(II)-[cytochrome c] + O2 + 8 H(+)(in) = 4 Fe(III)-[cytochrome c] + 2 H2O + 4 H(+)(out). Component of the cytochrome c oxidase, the last enzyme in the mitochondrial electron transport chain which drives oxidative phosphorylation. The respiratory chain contains 3 multisubunit complexes succinate dehydrogenase (complex II, CII), ubiquinol-cytochrome c oxidoreductase (cytochrome b-c1 complex, complex III, CIII) and cytochrome c oxidase (complex IV, CIV), that cooperate to transfer electrons derived from NADH and succinate to molecular oxygen, creating an electrochemical gradient over the inner membrane that drives transmembrane transport and the ATP synthase. Cytochrome c oxidase is the component of the respiratory chain that catalyzes the reduction of oxygen to water. Electrons originating from reduced cytochrome c in the intermembrane space (IMS) are transferred via the dinuclear copper A center (CU(A)) of subunit 2 and heme A of subunit 1 to the active site in subunit 1, a binuclear center (BNC) formed by heme A3 and copper B (CU(B)). The BNC reduces molecular oxygen to 2 water molecules using 4 electrons from cytochrome c in the IMS and 4 protons from the mitochondrial matrix. The protein is Cytochrome c oxidase subunit 2 (cox-2) of Caenorhabditis remanei (Caenorhabditis vulgaris).